The sequence spans 158 residues: Large ribosomal subunit protein uL11 (158 aa).

This sequence belongs to the universal ribosomal protein uL11 family. In terms of assembly, part of the ribosomal stalk of the 50S ribosomal subunit. Interacts with L10 and the large rRNA to form the base of the stalk. L10 forms an elongated spine to which L12 dimers bind in a sequential fashion forming a multimeric L10(L12)X complex.

Its function is as follows. Forms part of the ribosomal stalk which helps the ribosome interact with GTP-bound translation factors. In Methanospirillum hungatei JF-1 (strain ATCC 27890 / DSM 864 / NBRC 100397 / JF-1), this protein is Large ribosomal subunit protein uL11.